Consider the following 790-residue polypeptide: MSRRRHSDENDGGQPHKRRKTSDANETEDHLESLICKVGEKSACSLESNLEGLAGVLEADLPNYKSKILRLLCTVARLLPEKLTIYTTLVGLLNARNYNFGGEFVEAMIRQLKESLKANNYNEAVYLVRFLSDLVNCHVIAAPSMVAMFENFVSVTQEEDVPQVRRDWYVYAFLSSLPWVGKELYEKKDAEMDRIFANTESYLKRRQKTHVPMLQVWTADKPHPQEEYLDCLWAQIQKLKKDRWQERHILRPYLAFDSILCEALQHNLPPFTPPPHTEDSVYPMPRVIFRMFDYTDDPEGPVMPGSHSVERFVIEENLHCIIKSHWKERKTCAAQLVSYPGKNKIPLNYHIVEVIFAELFQLPAPPHIDVMYTTLLIELCKLQPGSLPQVLAQATEMLYMRLDTMNTTCVDRFINWFSHHLSNFQFRWSWEDWSDCLSQDPESPKPKFVREVLEKCMRLSYHQRILDIVPPTFSALCPANPTCIYKYGDESSNSLPGHSVALCLAVAFKSKATNDEIFSILKDVPNPNQDDDDDEGFSFNPLKIEVFVQTLLHLAAKSFSHSFSALAKFHEVFKTLAESDEGKLHVLRVMFEVWRNHPQMIAVLVDKMIRTQIVDCAAVANWIFSSELSRDFTRLFVWEILHSTIRKMNKHVLKIQKELEEAKEKLARQHKRRSDDDDRSSDRKDGVLEEQIERLQEKVESAQSEQKNLFLVIFQRFIMILTEHLVRCETDGTSVLTPWYKNCIERLQQIFLQHHQIIQQYMVTLENLLFTAELDPHILAVFQQFCALQA.

Residues 1 to 26 are disordered; it reads MSRRRHSDENDGGQPHKRRKTSDANE. Positions 3–20 match the Nuclear localization signal motif; the sequence is RRRHSDENDGGQPHKRRK. S7 carries the phosphoserine; by RPS6KB1 modification. T21 is subject to Phosphothreonine; by RPS6KB1. At S22 the chain carries Phosphoserine; by RPS6KB1. The 213-residue stretch at 28 to 240 folds into the MIF4G domain; that stretch reads EDHLESLICK…CLWAQIQKLK (213 aa). A Phosphoserine modification is found at S201. K204 carries the N6-acetyllysine modification. Positions 643 to 713 form a coiled coil; that stretch reads STIRKMNKHV…SEQKNLFLVI (71 aa). A Glycyl lysine isopeptide (Lys-Gly) (interchain with G-Cter in SUMO2) cross-link involves residue K684. Position 698 is an N6-acetyllysine (K698).

The protein belongs to the NCBP1 family. Component of the nuclear cap-binding complex (CBC), a heterodimer composed of NCBP1/CBP80 and NCBP2/CBP20 that interacts with m7GpppG-capped RNA. Found in a U snRNA export complex containing PHAX/RNUXA, NCBP1/CBP80, NCBP2/CBP20, RAN, XPO1 and m7G-capped RNA. Identified in a IGF2BP1-dependent mRNP granule complex containing untranslated mRNAs. Interacts with PHAX/RNUXA, SRRT/ARS2, EIF4G2, IGF2BP1, HNRNPF, HNRNPH1, KIAA0427/CTIF, PARN, DROSHA, UPF1 and ALYREF/THOC4. May interact with EIF4G1; the interaction is however controversial since it is reported by PubMed:11340157, PubMed:15059963 and PubMed:15361857, but is not observed by PubMed:19648179. The large PER complex involved in the repression of transcriptional termination is composed of at least PER2, CDK9, DDX5, DHX9, NCBP1/CBP80 and POLR2A. Component of an alternative nuclear cap-binding complex (CBC) composed of NCBP1/CBP80 and NCBP3. Interacts with METTL3. Interacts with ZFC3H1 in a RNase-insensitive manner. Interacts with MTREX. Interacts with TASOR. Interacts with DHX34; the interaction is RNA-dependent. Interacts with KPNA3. Post-translationally, dephosphorylated at Thr-21 by the PNUTS-PP1 complex during RNA polymerase II transcription pause-release.

The protein resides in the nucleus. Its subcellular location is the cytoplasm. Its function is as follows. Component of the cap-binding complex (CBC), which binds cotranscriptionally to the 5'-cap of pre-mRNAs and is involved in various processes such as pre-mRNA splicing, translation regulation, nonsense-mediated mRNA decay, RNA-mediated gene silencing (RNAi) by microRNAs (miRNAs) and mRNA export. The CBC complex is involved in mRNA export from the nucleus via its interaction with ALYREF/THOC4/ALY, leading to the recruitment of the mRNA export machinery to the 5'-end of mRNA and to mRNA export in a 5' to 3' direction through the nuclear pore. The CBC complex is also involved in mediating U snRNA and intronless mRNAs export from the nucleus. The CBC complex is essential for a pioneer round of mRNA translation, before steady state translation when the CBC complex is replaced by cytoplasmic cap-binding protein eIF4E. The pioneer round of mRNA translation mediated by the CBC complex plays a central role in nonsense-mediated mRNA decay (NMD), NMD only taking place in mRNAs bound to the CBC complex, but not on eIF4E-bound mRNAs. The CBC complex enhances NMD in mRNAs containing at least one exon-junction complex (EJC) via its interaction with UPF1, promoting the interaction between UPF1 and UPF2. The CBC complex is also involved in 'failsafe' NMD, which is independent of the EJC complex, while it does not participate in Staufen-mediated mRNA decay (SMD). During cell proliferation, the CBC complex is also involved in microRNAs (miRNAs) biogenesis via its interaction with SRRT/ARS2 and is required for miRNA-mediated RNA interference. The CBC complex also acts as a negative regulator of PARN, thereby acting as an inhibitor of mRNA deadenylation. In the CBC complex, NCBP1/CBP80 does not bind directly capped RNAs (m7GpppG-capped RNA) but is required to stabilize the movement of the N-terminal loop of NCBP2/CBP20 and lock the CBC into a high affinity cap-binding state with the cap structure. Associates with NCBP3 to form an alternative cap-binding complex (CBC) which plays a key role in mRNA export and is particularly important in cellular stress situations such as virus infections. The conventional CBC with NCBP2 binds both small nuclear RNA (snRNA) and messenger (mRNA) and is involved in their export from the nucleus whereas the alternative CBC with NCBP3 does not bind snRNA and associates only with mRNA thereby playing a role only in mRNA export. NCBP1/CBP80 is required for cell growth and viability. The chain is Nuclear cap-binding protein subunit 1 (NCBP1) from Homo sapiens (Human).